The sequence spans 207 residues: Large ribosomal subunit protein uL4 (207 aa).

A disordered region spans residues 44-71; the sequence is RRQGTQSAKTRAEVRGGGRKPWKQKGTG. A compositionally biased stretch (basic residues) spans 60–71; sequence GGRKPWKQKGTG.

It belongs to the universal ribosomal protein uL4 family. In terms of assembly, part of the 50S ribosomal subunit.

Its function is as follows. One of the primary rRNA binding proteins, this protein initially binds near the 5'-end of the 23S rRNA. It is important during the early stages of 50S assembly. It makes multiple contacts with different domains of the 23S rRNA in the assembled 50S subunit and ribosome. Forms part of the polypeptide exit tunnel. The chain is Large ribosomal subunit protein uL4 from Alkaliphilus oremlandii (strain OhILAs) (Clostridium oremlandii (strain OhILAs)).